Reading from the N-terminus, the 313-residue chain is ADP-L-glycero-D-manno-heptose-6-epimerase (313 aa).

Residues 10-11 (MI), 31-32 (DN), Lys-38, Arg-53, 75-79 (EGACS), and Asn-92 each bind NADP(+). Residue Tyr-139 is the Proton acceptor of the active site. Lys-143 lines the NADP(+) pocket. Residue Asn-174 participates in substrate binding. NADP(+) is bound by residues Val-175 and Lys-183. Lys-183 (proton acceptor) is an active-site residue. Residues Ser-185, His-192, 206 to 209 (FAGS), Arg-214, and Tyr-277 contribute to the substrate site.

The protein belongs to the NAD(P)-dependent epimerase/dehydratase family. HldD subfamily. As to quaternary structure, homopentamer. Requires NADP(+) as cofactor.

It catalyses the reaction ADP-D-glycero-beta-D-manno-heptose = ADP-L-glycero-beta-D-manno-heptose. Its pathway is nucleotide-sugar biosynthesis; ADP-L-glycero-beta-D-manno-heptose biosynthesis; ADP-L-glycero-beta-D-manno-heptose from D-glycero-beta-D-manno-heptose 7-phosphate: step 4/4. Catalyzes the interconversion between ADP-D-glycero-beta-D-manno-heptose and ADP-L-glycero-beta-D-manno-heptose via an epimerization at carbon 6 of the heptose. In Vibrio campbellii (strain ATCC BAA-1116), this protein is ADP-L-glycero-D-manno-heptose-6-epimerase.